Consider the following 293-residue polypeptide: Foldase protein PrsA 2 (293 aa).

The N-terminal stretch at 1–20 (MKKKLILGLVMMMALFSLAA) is a signal peptide. Cysteine 21 is lipidated: N-palmitoyl cysteine. Cysteine 21 carries S-diacylglycerol cysteine lipidation. One can recognise a PpiC domain in the interval 135–226 (QPDITVSHIL…YGYHIIQMDK (92 aa)).

This sequence belongs to the PrsA family.

The protein localises to the cell membrane. It catalyses the reaction [protein]-peptidylproline (omega=180) = [protein]-peptidylproline (omega=0). In terms of biological role, plays a major role in protein secretion by helping the post-translocational extracellular folding of several secreted proteins. This is Foldase protein PrsA 2 from Listeria monocytogenes serotype 4b (strain F2365).